A 462-amino-acid chain; its full sequence is Violaxanthin de-epoxidase, chloroplastic (462 aa).

Cys231 and Cys362 are oxidised to a cystine. The stretch at 372–437 (IEKTVEEGER…RELSKEEMEF (66 aa)) forms a coiled coil. The involved in the binding to the thylakoid membrane stretch occupies residues 380–391 (ERIIVKEVEEIE).

Belongs to the calycin superfamily. Lipocalin family. In terms of assembly, interacts in vitro with LTO1.

The protein resides in the plastid. It localises to the chloroplast thylakoid membrane. It carries out the reaction all-trans-violaxanthin + 2 L-ascorbate = all-trans-zeaxanthin + 2 L-dehydroascorbate + 2 H2O. Activity limited by low ascorbate availability. Feedback inhibition by zeaxanthin. Requires the presence of micelle-forming lipids such as monogalactosyldiacylglyceride (MGDG). Low concentration of bilayer forming lipids, such as digalactosyldiacylglyceride (DGDG) or phosphatidylcholine, supports a slower but nearly complete activity. 80% of the specific activity in lumenal chloroplast fractions is lost in vitro in the presence of reduced thioredoxin. Part of the xanthophyll (or violaxanthin) cycle for controlling the concentration of zeaxanthin in chloroplasts. Catalyzes the two-step mono de-epoxidation reaction. Stereospecific for all-trans xanthophylls. Zeaxanthin induces the dissipation of excitation energy in the chlorophyll of the light-harvesting protein complex of photosystem II. This Arabidopsis thaliana (Mouse-ear cress) protein is Violaxanthin de-epoxidase, chloroplastic.